A 316-amino-acid chain; its full sequence is 4-hydroxy-3-methylbut-2-enyl diphosphate reductase (316 aa).

Cys12 lines the [4Fe-4S] cluster pocket. (2E)-4-hydroxy-3-methylbut-2-enyl diphosphate contacts are provided by His41 and His74. Residues His41 and His74 each coordinate dimethylallyl diphosphate. Residues His41 and His74 each coordinate isopentenyl diphosphate. Cys96 serves as a coordination point for [4Fe-4S] cluster. His124 is a binding site for (2E)-4-hydroxy-3-methylbut-2-enyl diphosphate. His124 contributes to the dimethylallyl diphosphate binding site. Position 124 (His124) interacts with isopentenyl diphosphate. The active-site Proton donor is the Glu126. Thr167 is a (2E)-4-hydroxy-3-methylbut-2-enyl diphosphate binding site. Cys197 is a [4Fe-4S] cluster binding site. Positions 225, 226, 227, and 269 each coordinate (2E)-4-hydroxy-3-methylbut-2-enyl diphosphate. Residues Ser225, Ser226, Asn227, and Ser269 each contribute to the dimethylallyl diphosphate site. Positions 225, 226, 227, and 269 each coordinate isopentenyl diphosphate.

The protein belongs to the IspH family. In terms of assembly, homodimer. It depends on [4Fe-4S] cluster as a cofactor.

It catalyses the reaction isopentenyl diphosphate + 2 oxidized [2Fe-2S]-[ferredoxin] + H2O = (2E)-4-hydroxy-3-methylbut-2-enyl diphosphate + 2 reduced [2Fe-2S]-[ferredoxin] + 2 H(+). The enzyme catalyses dimethylallyl diphosphate + 2 oxidized [2Fe-2S]-[ferredoxin] + H2O = (2E)-4-hydroxy-3-methylbut-2-enyl diphosphate + 2 reduced [2Fe-2S]-[ferredoxin] + 2 H(+). It functions in the pathway isoprenoid biosynthesis; dimethylallyl diphosphate biosynthesis; dimethylallyl diphosphate from (2E)-4-hydroxy-3-methylbutenyl diphosphate: step 1/1. It participates in isoprenoid biosynthesis; isopentenyl diphosphate biosynthesis via DXP pathway; isopentenyl diphosphate from 1-deoxy-D-xylulose 5-phosphate: step 6/6. Its function is as follows. Catalyzes the conversion of 1-hydroxy-2-methyl-2-(E)-butenyl 4-diphosphate (HMBPP) into a mixture of isopentenyl diphosphate (IPP) and dimethylallyl diphosphate (DMAPP). Acts in the terminal step of the DOXP/MEP pathway for isoprenoid precursor biosynthesis. This is 4-hydroxy-3-methylbut-2-enyl diphosphate reductase from Salmonella paratyphi B (strain ATCC BAA-1250 / SPB7).